Reading from the N-terminus, the 325-residue chain is MNLSAAHHQISLSDGNNIPLIGLGTYSDPRPVPGKTYVAVKTAIDEGYRHIDGAYVYHNEHEVGEAIREKIAEGKVKREEIFYCGKLWNTEHVPSMVLPALERTLKALKLDYIDLYIIELPMAFKPGKEIYPRDENGRIIYDKTNLCATWEALEACKDAGLVKSLGVSNFNRRQLELILNKPGLKYKPVTNQVECHPYFTQTKLLKFCQQHDIVIVAHSPLGTCRNPSWVNVSSPPLLNDELLTSLGKKYNKTQAQIVLRFNIQRGIVVIPKSFTPERIKENFQIFDFSLTEEEMKDIDALNKNVRYVELLMWSDHPEYPFHDEY.

NADP(+)-binding positions include 22–26 (GLGTY) and aspartate 52. Tyrosine 26 lines the substrate pocket. Substrate-binding residues include tyrosine 57, tryptophan 88, glutamate 119, and tyrosine 131. The active-site Proton donor is tyrosine 57. NADP(+) contacts are provided by residues 168–169 (SN), glutamine 192, and 218–223 (HSPLGT). Serine 228 bears the Phosphoserine mark. Tryptophan 229 is a binding site for substrate. 272–282 (KSFTPERIKEN) is a binding site for NADP(+).

It belongs to the aldo/keto reductase family.

The protein resides in the cytoplasm. The catalysed reaction is 5beta-cholestan-3-one + NADP(+) = cholest-4-en-3-one + NADPH + H(+). The enzyme catalyses 4,5beta-dihydrocortisone + NADP(+) = cortisone + NADPH + H(+). It catalyses the reaction cortisol + NADPH + H(+) = 5beta-dihydrocortisol + NADP(+). It carries out the reaction corticosterone + NADPH + H(+) = 5beta-dihydrocorticosterone + NADP(+). The catalysed reaction is 7alpha,12alpha-dihydroxycholest-4-en-3-one + NADPH + H(+) = 7alpha,12alpha-dihydroxy-5beta-cholestan-3-one + NADP(+). The enzyme catalyses 7alpha-hydroxycholest-4-en-3-one + NADPH + H(+) = 7alpha-hydroxy-5beta-cholestan-3-one + NADP(+). It catalyses the reaction epitestosterone + NADPH + H(+) = 5beta-dihydroepitestosterone + NADP(+). It carries out the reaction androst-4-ene-3,17-dione + NADPH + H(+) = 5beta-androstane-3,17-dione + NADP(+). The catalysed reaction is progesterone + NADPH + H(+) = 5beta-pregnan-3,20-dione + NADP(+). The enzyme catalyses 21-hydroxyprogesterone + NADPH + H(+) = 5beta-dihydrodeoxycorticosterone + NADP(+). It catalyses the reaction aldosterone + NADPH + H(+) = 5beta-dihydroaldosterone + NADP(+). It carries out the reaction 17beta-hydroxyandrosta-1,4-dien-3-one + NADPH + H(+) = 17beta-hydroxy-5beta-androst-1-en-3-one + NADP(+). The catalysed reaction is 17beta-hydroxyestr-4-en-3-one + NADPH + H(+) = 17beta-hydroxy-5beta-estran-3-one + NADP(+). The enzyme catalyses 5beta-dihydrotestosterone + NADP(+) = testosterone + NADPH + H(+). It catalyses the reaction androst-4-ene-3,11,17-trione + NADPH + H(+) = 17beta-hydroxyandrost-4-ene-3,11-dione + NADP(+). Subject to inhibition by high substrate concentrations. Inhibited by testosterone concentrations above 10 uM. Inhibited by the primary and secondary bile acids chenodeoxycholic acid and ursodeoxycholic acid. Its function is as follows. Catalyzes the stereospecific NADPH-dependent reduction of the C4-C5 double bond of bile acid intermediates and steroid hormones carrying a delta(4)-3-one structure to yield an A/B cis-ring junction. This cis-configuration is crucial for bile acid biosynthesis and plays important roles in steroid metabolism. Capable of reducing a broad range of delta-(4)-3-ketosteroids from C18 (such as, 17beta-hydroxyestr-4-en-3-one) to C27 (such as, 7alpha-hydroxycholest-4-en-3-one). In Mus musculus (Mouse), this protein is Aldo-keto reductase family 1 member D1 (Akr1d1).